A 306-amino-acid polypeptide reads, in one-letter code: Glutathione transport system permease protein GsiC (306 aa).

At 1–8 the chain is on the cytoplasmic side; that stretch reads MLNYVLKR. A helical membrane pass occupies residues 9-29; that stretch reads LLGLIPTLLIVAVLVFLFVHL. Residues 30–102 are Periplasmic-facing; sequence LPGDPARLIA…SRFLPTLWLT (73 aa). The ABC transmembrane type-1 domain maps to 95-292; sequence FLPTLWLTIT…LEFILINLVV (198 aa). Residues 103–123 form a helical membrane-spanning segment; it reads ITSMIWAVLFGMAIGIAAAVW. Over 124-134 the chain is Cytoplasmic; that stretch reads RNRWPDRLGMT. Residues 135–155 traverse the membrane as a helical segment; sequence LAVTGISFPAFALGMLLMQIF. Residues 156 to 168 lie on the Periplasmic side of the membrane; that stretch reads SVDLGWLPTVGAD. Residues 169 to 189 form a helical membrane-spanning segment; that stretch reads SWQHYILPSLTLGAAVASVMA. The Cytoplasmic segment spans residues 190–228; sequence RFTRSSFVDVLSEDYMRTARAKGVSETWVVLKHGLRNAM. A helical membrane pass occupies residues 229–249; it reads IPVVTMMGLQFGFLLGGSIVV. Residues 250–278 lie on the Periplasmic side of the membrane; that stretch reads EKVFNWPGLGRLLVDSVDMRDYPVIQAEV. The chain crosses the membrane as a helical span at residues 279-299; the sequence is LLFSLEFILINLVVDVLYAAI. The Cytoplasmic portion of the chain corresponds to 300–306; the sequence is NPAIRYK.

This sequence belongs to the binding-protein-dependent transport system permease family. As to quaternary structure, the complex is composed of two ATP-binding proteins (GsiA), two transmembrane proteins (GsiC and GsiD) and a solute-binding protein (GsiB).

The protein localises to the cell inner membrane. In terms of biological role, part of the ABC transporter complex GsiABCD involved in glutathione import. Probably responsible for the translocation of the substrate across the membrane. This is Glutathione transport system permease protein GsiC from Salmonella typhimurium (strain LT2 / SGSC1412 / ATCC 700720).